The primary structure comprises 344 residues: Dihydroorotate dehydrogenase (quinone) (344 aa).

Residues 65–69 (AGLDK) and T89 each bind FMN. A substrate-binding site is contributed by K69. 114–118 (NRMGF) contacts substrate. Positions 145 and 178 each coordinate FMN. N178 contacts substrate. The Nucleophile role is filled by S181. A substrate-binding site is contributed by N183. Positions 223 and 251 each coordinate FMN. Residue 252–253 (NT) participates in substrate binding. FMN-binding positions include G274, G303, and 324-325 (YS).

Belongs to the dihydroorotate dehydrogenase family. Type 2 subfamily. As to quaternary structure, monomer. Requires FMN as cofactor.

It localises to the cell membrane. It carries out the reaction (S)-dihydroorotate + a quinone = orotate + a quinol. The protein operates within pyrimidine metabolism; UMP biosynthesis via de novo pathway; orotate from (S)-dihydroorotate (quinone route): step 1/1. Catalyzes the conversion of dihydroorotate to orotate with quinone as electron acceptor. This is Dihydroorotate dehydrogenase (quinone) from Cupriavidus taiwanensis (strain DSM 17343 / BCRC 17206 / CCUG 44338 / CIP 107171 / LMG 19424 / R1) (Ralstonia taiwanensis (strain LMG 19424)).